The primary structure comprises 295 residues: Probable endonuclease 4 (295 aa).

Positions 78, 118, 154, 188, 191, 225, 238, 240, and 270 each coordinate Zn(2+).

It belongs to the AP endonuclease 2 family. Zn(2+) serves as cofactor.

It carries out the reaction Endonucleolytic cleavage to 5'-phosphooligonucleotide end-products.. Its function is as follows. Endonuclease IV plays a role in DNA repair. It cleaves phosphodiester bonds at apurinic or apyrimidinic (AP) sites, generating a 3'-hydroxyl group and a 5'-terminal sugar phosphate. In Vibrio parahaemolyticus serotype O3:K6 (strain RIMD 2210633), this protein is Probable endonuclease 4.